Reading from the N-terminus, the 507-residue chain is 2,3-bisphosphoglycerate-independent phosphoglycerate mutase (507 aa).

2 residues coordinate Mn(2+): Asp-13 and Ser-63. The active-site Phosphoserine intermediate is Ser-63. Substrate is bound by residues His-122, 152–153, Arg-184, Arg-190, 256–259, and Lys-330; these read RD and RADR. Positions 397, 401, 438, 439, and 457 each coordinate Mn(2+).

The protein belongs to the BPG-independent phosphoglycerate mutase family. As to quaternary structure, monomer. Requires Mn(2+) as cofactor.

It catalyses the reaction (2R)-2-phosphoglycerate = (2R)-3-phosphoglycerate. The protein operates within carbohydrate degradation; glycolysis; pyruvate from D-glyceraldehyde 3-phosphate: step 3/5. Functionally, catalyzes the interconversion of 2-phosphoglycerate and 3-phosphoglycerate. In Chromobacterium violaceum (strain ATCC 12472 / DSM 30191 / JCM 1249 / CCUG 213 / NBRC 12614 / NCIMB 9131 / NCTC 9757 / MK), this protein is 2,3-bisphosphoglycerate-independent phosphoglycerate mutase.